The following is a 353-amino-acid chain: Anthranilate phosphoribosyltransferase (353 aa).

Residues Gly87, 90–91, Thr95, 97–100, 115–123, and Thr127 each bind 5-phospho-alpha-D-ribose 1-diphosphate; these read GD, NIST, and KHGNRAASS. Gly87 is an anthranilate binding site. Position 99 (Ser99) interacts with Mg(2+). Asn118 is a binding site for anthranilate. An anthranilate-binding site is contributed by Arg173. The Mg(2+) site is built by Asp231 and Glu232.

This sequence belongs to the anthranilate phosphoribosyltransferase family. As to quaternary structure, homodimer. The cofactor is Mg(2+).

The catalysed reaction is N-(5-phospho-beta-D-ribosyl)anthranilate + diphosphate = 5-phospho-alpha-D-ribose 1-diphosphate + anthranilate. The protein operates within amino-acid biosynthesis; L-tryptophan biosynthesis; L-tryptophan from chorismate: step 2/5. Its function is as follows. Catalyzes the transfer of the phosphoribosyl group of 5-phosphorylribose-1-pyrophosphate (PRPP) to anthranilate to yield N-(5'-phosphoribosyl)-anthranilate (PRA). This is Anthranilate phosphoribosyltransferase from Salinispora arenicola (strain CNS-205).